Here is a 201-residue protein sequence, read N- to C-terminus: LexA repressor (201 aa).

The segment at residues 27–47 (RMEISSAFGFASPNAAEDHLK) is a DNA-binding region (H-T-H motif). Active-site for autocatalytic cleavage activity residues include Ser116 and Lys153.

The protein belongs to the peptidase S24 family. Homodimer.

The catalysed reaction is Hydrolysis of Ala-|-Gly bond in repressor LexA.. Represses a number of genes involved in the response to DNA damage (SOS response), including recA and lexA. In the presence of single-stranded DNA, RecA interacts with LexA causing an autocatalytic cleavage which disrupts the DNA-binding part of LexA, leading to derepression of the SOS regulon and eventually DNA repair. This Dechloromonas aromatica (strain RCB) protein is LexA repressor.